Reading from the N-terminus, the 345-residue chain is Anthranilate phosphoribosyltransferase (345 aa).

Residues Gly-80, 83–84 (GD), Thr-88, 90–93 (NIST), 108–116 (KHGNRSVSS), and Ser-120 contribute to the 5-phospho-alpha-D-ribose 1-diphosphate site. Position 80 (Gly-80) interacts with anthranilate. A Mg(2+)-binding site is contributed by Ser-92. Asn-111 lines the anthranilate pocket. Arg-166 contributes to the anthranilate binding site. Mg(2+) is bound by residues Asp-225 and Glu-226.

Belongs to the anthranilate phosphoribosyltransferase family. Homodimer. Mg(2+) serves as cofactor.

It carries out the reaction N-(5-phospho-beta-D-ribosyl)anthranilate + diphosphate = 5-phospho-alpha-D-ribose 1-diphosphate + anthranilate. It functions in the pathway amino-acid biosynthesis; L-tryptophan biosynthesis; L-tryptophan from chorismate: step 2/5. Catalyzes the transfer of the phosphoribosyl group of 5-phosphorylribose-1-pyrophosphate (PRPP) to anthranilate to yield N-(5'-phosphoribosyl)-anthranilate (PRA). The chain is Anthranilate phosphoribosyltransferase from Pelotomaculum thermopropionicum (strain DSM 13744 / JCM 10971 / SI).